The primary structure comprises 347 residues: Quinolinate synthase (347 aa).

Positions 47 and 68 each coordinate iminosuccinate. Cys-113 is a binding site for [4Fe-4S] cluster. Iminosuccinate contacts are provided by residues 139 to 141 (YAN) and Ser-156. Cys-200 serves as a coordination point for [4Fe-4S] cluster. Iminosuccinate contacts are provided by residues 226–228 (HPE) and Thr-243. Cys-297 lines the [4Fe-4S] cluster pocket.

The protein belongs to the quinolinate synthase family. Type 1 subfamily. [4Fe-4S] cluster serves as cofactor.

It localises to the cytoplasm. It carries out the reaction iminosuccinate + dihydroxyacetone phosphate = quinolinate + phosphate + 2 H2O + H(+). Its pathway is cofactor biosynthesis; NAD(+) biosynthesis; quinolinate from iminoaspartate: step 1/1. Catalyzes the condensation of iminoaspartate with dihydroxyacetone phosphate to form quinolinate. This chain is Quinolinate synthase, found in Escherichia coli O45:K1 (strain S88 / ExPEC).